A 229-amino-acid chain; its full sequence is 3,4-dihydroxy-2-butanone 4-phosphate synthase (229 aa).

D-ribulose 5-phosphate-binding positions include 28–29 (RE), Asp-33, 164–168 (RGGHT), and Glu-188. A Mg(2+)-binding site is contributed by Glu-29. Mg(2+) is bound at residue His-167.

This sequence belongs to the DHBP synthase family. Homodimer. The cofactor is Mg(2+). Mn(2+) is required as a cofactor.

It carries out the reaction D-ribulose 5-phosphate = (2S)-2-hydroxy-3-oxobutyl phosphate + formate + H(+). Its pathway is cofactor biosynthesis; riboflavin biosynthesis; 2-hydroxy-3-oxobutyl phosphate from D-ribulose 5-phosphate: step 1/1. Functionally, catalyzes the conversion of D-ribulose 5-phosphate to formate and 3,4-dihydroxy-2-butanone 4-phosphate. The chain is 3,4-dihydroxy-2-butanone 4-phosphate synthase from Methanothermobacter thermautotrophicus (strain ATCC 29096 / DSM 1053 / JCM 10044 / NBRC 100330 / Delta H) (Methanobacterium thermoautotrophicum).